Reading from the N-terminus, the 720-residue chain is Nucleoporin NUP2 (720 aa).

The disordered stretch occupies residues 1–33; that stretch reads MAKRVADAQIQRETYDSNESDDDVTPSTKVASS. Phosphoserine occurs at positions 17 and 20. The interval 35-50 is interaction with SRP1 NLS binding site 1; it reads VMNRRKIAMPKRRMAF. Disordered stretches follow at residues 52–92 and 136–278; these read PFGS…SNSR and KSIE…VDNN. Residues 67-69 form an FXF 1 repeat; the sequence is FSF. Positions 81-92 are enriched in polar residues; the sequence is VDNSPTTESNSR. Ser-137 carries the phosphoserine modification. Residues 147–159 show a composition bias toward basic and acidic residues; the sequence is NDAKPAKVEDVQK. Ser-165 is modified (phosphoserine). An FXFG 1 repeat occupies 189–192; sequence FSFG. Over residues 193-202 the composition is skewed to basic and acidic residues; sequence PKKENRKKDE. Residues Ser-203 and Ser-205 each carry the phosphoserine modification. FXF repeat units follow at residues 216–218 and 247–249; these read FKF and FSF. Over residues 243-278 the composition is skewed to polar residues; sequence NAKPFSFSSATSTTEQTKSKNPLSLTEATKTNVDNN. 3 FXFG repeats span residues 285–288, 302–305, and 318–321; these read FTFG and FVFG. Over residues 315-324 the composition is skewed to polar residues; the sequence is KSSFTFGSTT. The disordered stretch occupies residues 315–604; the sequence is KSSFTFGSTT…KPINLQNGEE (290 aa). The segment covering 345-360 has biased composition (low complexity); the sequence is SNDSNPSFSFSIPSKN. 2 positions are modified to phosphoserine: Ser-348 and Ser-351. An FXF 4 repeat occupies 352–354; sequence FSF. The residue at position 361 (Thr-361) is a Phosphothreonine. Residues 369 to 372 form an FXFG 5 repeat; that stretch reads FSFG. Residues 373–384 show a composition bias toward polar residues; the sequence is VPNSSKNETSKP. An FXFG 6 repeat occupies 386–389; that stretch reads FSFG. The segment covering 424–435 has biased composition (basic and acidic residues); sequence TEKEKESKKDSK. FXFG repeat units lie at residues 438 to 441, 474 to 477, 493 to 496, 511 to 514, and 524 to 527; these read FSFG and FTFG. Over residues 479 to 495 the composition is skewed to low complexity; sequence NTNTTKTADTKAPTFTF. A compositionally biased stretch (polar residues) spans 513 to 533; that stretch reads FGTSQPNNTPSFSFGKTTANL. Low complexity predominate over residues 534 to 548; sequence PANSSTSPAPSIPST. The FXF 5 repeat unit spans residues 550 to 552; sequence FKF. Positions 574–584 are enriched in polar residues; sequence TEATGNESQDA. Ser-581 carries the post-translational modification Phosphoserine. The region spanning 583 to 720 is the RanBD1 domain; the sequence is DATKVDATPE…AIEDAKKEMK (138 aa). Thr-590 bears the Phosphothreonine mark.

As to quaternary structure, component of the nuclear pore complex (NPC). NPC constitutes the exclusive means of nucleocytoplasmic transport. NPCs allow the passive diffusion of ions and small molecules and the active, nuclear transport receptor-mediated bidirectional transport of macromolecules such as proteins, RNAs, ribonucleoparticles (RNPs), and ribosomal subunits across the nuclear envelope. Due to its 8-fold rotational symmetry, all subunits are present with 8 copies or multiples thereof. Binds to the nuclear basket of the NPC through NUP60 in a (GSP1, GSP2) GTPase-GTP-dependent manner. Interacts through its FG repeats with nuclear transport factors. Interacts with KAP122.

The protein localises to the nucleus. It localises to the nuclear pore complex. It is found in the nucleus membrane. Its function is as follows. Functions as a component of the nuclear pore complex (NPC). NPC components, collectively referred to as nucleoporins (NUPs), can play the role of both NPC structural components and of docking or interaction partners for transiently associated nuclear transport factors. Active directional transport is assured by both, a Phe-Gly (FG) repeat affinity gradient for these transport factors across the NPC and a transport cofactor concentration gradient across the nuclear envelope (GSP1 and GSP2 GTPases associated predominantly with GTP in the nucleus, with GDP in the cytoplasm). As one of the FG repeat nucleoporins NUP2 is involved in interactions with and guidance of nuclear transport receptors such as SRP1-KAP95 (importin alpha and beta) through the NPC. Like the closely related NUP1 it also plays an important role in disassembling and recycling SRP1-KAP95 to the cytoplasm after nuclear import. Upon entry of the heterotrimeric SRP1-KAP95-cargo complex in the nucleus, NUP2 binds through its N-terminus to the SRP1 nuclear localization signal (NLS) binding site, thus accelerating the release of the NLS-cargo. SRP1 in turn is released from NUP2 by binding of the GSP1-GTP associated export factor CSE1. NUP2 may also have a chromatin boundary/insulator activity through indirect interaction with genomic DNA via CSE1 and blocking of heterochromatin spreading. This is Nucleoporin NUP2 (NUP2) from Saccharomyces cerevisiae (strain ATCC 204508 / S288c) (Baker's yeast).